Reading from the N-terminus, the 571-residue chain is Wee1-like protein kinase 1-A (571 aa).

Residues 1–101 (MSLQPVPHRL…PDCPGTPPHK (101 aa)) form a disordered region. A compositionally biased stretch (pro residues) spans 81–98 (PASPPGPAASPPDCPGTP). Positions 224–494 (FHELEKIGSG…SMALVKHSVL (271 aa)) constitute a Protein kinase domain. Residues 230–238 (IGSGEFGSV) and Lys253 contribute to the ATP site. The Proton acceptor role is filled by Asp351. 2 residues coordinate Mg(2+): Asn356 and Asp388. A coiled-coil region spans residues 500-539 (KNAEQLRIELNAEKFKNALLQKELKKAQIAKAAAEERALF).

Belongs to the protein kinase superfamily. Ser/Thr protein kinase family. WEE1 subfamily. As to expression, zygotically expressed. Expressed in regions of the embryo that are devoid of mitotic cells, such as the involuting mesoderm.

It localises to the nucleus. It catalyses the reaction L-tyrosyl-[protein] + ATP = O-phospho-L-tyrosyl-[protein] + ADP + H(+). Functionally, acts as a zygotic negative regulator of entry into mitosis (G2 to M transition) by protecting the nucleus from cytoplasmically activated cyclin B1-complexed cdk1 before the onset of mitosis by mediating phosphorylation of cdk1 on 'Tyr-15'. Specifically phosphorylates and inactivates cyclin B1-complexed cdk1 reaching a maximum during G2 phase and a minimum as cells enter M phase. Phosphorylation of cyclin B1-cdk1 occurs exclusively on 'Tyr-15' and phosphorylation of monomeric cdk1 does not occur. Involved in convergent extension of the paraxial mesoderm during neurulation by inhibiting the cell cycle. This is Wee1-like protein kinase 1-A (wee1-a) from Xenopus laevis (African clawed frog).